A 428-amino-acid polypeptide reads, in one-letter code: MQELHLLWWALLLGLAQACPEPCDCGEKYGFQIADCAYRDLEAVPPGFPANVTALSLSANRLPGLPEGAFREVPLLQSLWLAHNEIRMVAAGALASLSHLKSLDLSHNLISDFAWSDLHNLSALQLLKMDSNELTFIPRDAFRSLHALRSLQLNHNRLHTLAEGTFTPLTALSHLQINDNPFDCTCGIVWLKTWALATAVSIPEQDNIACTSPHVLKGTPLSRLPPLPCSAPSVQLSYQPSQDGAELRPGFVLALHCDVDGQPAPQLHWHIQIPSGIVEITSPNVGTDGRALPGTPVASSQPRFQAFANGSLLIPDFGKLEEGTYSCLATNELGSAESSVDVALATPGEGGEDTLGRRFHGKAVEGKGCYTVDNEVQPSGPEDNVVIIYLSRAGNPEAAVAEGVPGQLPPGLLLLGQSLLLLFFLTSS.

The N-terminal stretch at 1 to 18 is a signal peptide; the sequence is MQELHLLWWALLLGLAQA. The 32-residue stretch at 19–50 folds into the LRRNT domain; it reads CPEPCDCGEKYGFQIADCAYRDLEAVPPGFPA. The N-linked (GlcNAc...) asparagine glycan is linked to N51. LRR repeat units follow at residues 51–72, 75–96, 99–122, 123–144, and 147–168; these read NVTALSLSANRLPGLPEGAFRE, LLQSLWLAHNEIRMVAAGALAS, HLKSLDLSHNLISDFAWSDLHNLS, ALQLLKMDSNELTFIPRDAFRS, and ALRSLQLNHNRLHTLAEGTFTP. Residues 180-231 enclose the LRRCT domain; the sequence is NPFDCTCGIVWLKTWALATAVSIPEQDNIACTSPHVLKGTPLSRLPPLPCSA. One can recognise an Ig-like domain in the interval 232–343; it reads PSVQLSYQPS…GSAESSVDVA (112 aa). C257 and C327 are joined by a disulfide. N309 carries an N-linked (GlcNAc...) asparagine glycan.

It localises to the secreted. The protein is Immunoglobulin superfamily containing leucine-rich repeat protein (ISLR) of Pongo abelii (Sumatran orangutan).